The sequence spans 483 residues: Proline--tRNA ligase (483 aa).

Belongs to the class-II aminoacyl-tRNA synthetase family. ProS type 3 subfamily. Homodimer.

The protein localises to the cytoplasm. It catalyses the reaction tRNA(Pro) + L-proline + ATP = L-prolyl-tRNA(Pro) + AMP + diphosphate. In terms of biological role, catalyzes the attachment of proline to tRNA(Pro) in a two-step reaction: proline is first activated by ATP to form Pro-AMP and then transferred to the acceptor end of tRNA(Pro). This is Proline--tRNA ligase from Mycoplasma genitalium (strain ATCC 33530 / DSM 19775 / NCTC 10195 / G37) (Mycoplasmoides genitalium).